The primary structure comprises 427 residues: Peptidase B (427 aa).

Mn(2+)-binding residues include lysine 195 and aspartate 200. Residue lysine 207 is part of the active site. 3 residues coordinate Mn(2+): aspartate 218, aspartate 277, and glutamate 279. Arginine 281 is an active-site residue.

It belongs to the peptidase M17 family. As to quaternary structure, homohexamer. Mn(2+) serves as cofactor.

The protein localises to the cytoplasm. It catalyses the reaction Release of an N-terminal amino acid, Xaa, from a peptide or arylamide. Xaa is preferably Glu or Asp but may be other amino acids, including Leu, Met, His, Cys and Gln.. Functionally, probably plays an important role in intracellular peptide degradation. In Salmonella arizonae (strain ATCC BAA-731 / CDC346-86 / RSK2980), this protein is Peptidase B.